A 429-amino-acid polypeptide reads, in one-letter code: Neuronal pentraxin-2 (429 aa).

The first 14 residues, 1–14 (MLALLTVGVALAVA), serve as a signal peptide directing secretion. N146 and N187 each carry an N-linked (GlcNAc...) asparagine glycan. The Pentraxin (PTX) domain occupies 221–422 (DAFKVSLPLR…GASKWPVETC (202 aa)). A disulfide bridge connects residues C251 and C311. Residues N275, E353, Q354, D355, and Q365 each coordinate Ca(2+). N-linked (GlcNAc...) asparagine glycosylation is present at N391.

Homooligomer or heterooligomer (probably pentamer) with neuronal pentraxin receptor (NPTXR). Requires Ca(2+) as cofactor.

It localises to the secreted. Functionally, likely to play role in the modification of cellular properties that underlie long-term plasticity. Binds to agar matrix in a calcium-dependent manner. In Mus musculus (Mouse), this protein is Neuronal pentraxin-2 (Nptx2).